The chain runs to 99 residues: RNA-binding protein Hfq (99 aa).

The Sm domain maps to 9–68 (DPYLNALRRERIPVSIYLVNGIKLQGQIESFDQFVILLKNTVNQMVYKHAISTVVPARSV). The disordered stretch occupies residues 67–99 (SVSHHNNNAQQQYQQQAAQAASAQSNETSSQAE). Residues 72–99 (NNNAQQQYQQQAAQAASAQSNETSSQAE) show a composition bias toward low complexity.

It belongs to the Hfq family. As to quaternary structure, homohexamer.

RNA chaperone that binds small regulatory RNA (sRNAs) and mRNAs to facilitate mRNA translational regulation in response to envelope stress, environmental stress and changes in metabolite concentrations. Also binds with high specificity to tRNAs. This chain is RNA-binding protein Hfq, found in Actinobacillus succinogenes (strain ATCC 55618 / DSM 22257 / CCUG 43843 / 130Z).